Here is a 399-residue protein sequence, read N- to C-terminus: Probable peptidoglycan glycosyltransferase FtsW (399 aa).

Residues methionine 1 to proline 25 are Cytoplasmic-facing. A helical membrane pass occupies residues leucine 26–methionine 46. Over serine 47–alanine 64 the chain is Periplasmic. The chain crosses the membrane as a helical span at residues isoleucine 65–tryptophan 85. Residues glutamate 86 to histidine 88 lie on the Cytoplasmic side of the membrane. The chain crosses the membrane as a helical span at residues glycine 89–glycine 109. Residues arginine 110–arginine 117 lie on the Periplasmic side of the membrane. A helical transmembrane segment spans residues tryptophan 118–leucine 138. At tyrosine 139–asparagine 153 the chain is on the cytoplasmic side. A helical transmembrane segment spans residues glutamine 154–methionine 174. Over glutamine 175–aspartate 177 the chain is Periplasmic. Transmembrane regions (helical) follow at residues phenylalanine 178–serine 198 and leucine 199–phenylalanine 219. Topologically, residues serine 220 to serine 281 are periplasmic. Residues valine 282–leucine 302 traverse the membrane as a helical segment. Residues serine 303 to glutamine 326 lie on the Cytoplasmic side of the membrane. Residues glycine 327 to leucine 347 traverse the membrane as a helical segment. Over proline 348–threonine 353 the chain is Periplasmic. A helical membrane pass occupies residues leucine 354–leucine 374. The Cytoplasmic portion of the chain corresponds to leucine 375–alanine 399.

It belongs to the SEDS family. FtsW subfamily.

The protein localises to the cell inner membrane. It catalyses the reaction [GlcNAc-(1-&gt;4)-Mur2Ac(oyl-L-Ala-gamma-D-Glu-L-Lys-D-Ala-D-Ala)](n)-di-trans,octa-cis-undecaprenyl diphosphate + beta-D-GlcNAc-(1-&gt;4)-Mur2Ac(oyl-L-Ala-gamma-D-Glu-L-Lys-D-Ala-D-Ala)-di-trans,octa-cis-undecaprenyl diphosphate = [GlcNAc-(1-&gt;4)-Mur2Ac(oyl-L-Ala-gamma-D-Glu-L-Lys-D-Ala-D-Ala)](n+1)-di-trans,octa-cis-undecaprenyl diphosphate + di-trans,octa-cis-undecaprenyl diphosphate + H(+). Its pathway is cell wall biogenesis; peptidoglycan biosynthesis. Peptidoglycan polymerase that is essential for cell division. The chain is Probable peptidoglycan glycosyltransferase FtsW from Allochromatium vinosum (strain ATCC 17899 / DSM 180 / NBRC 103801 / NCIMB 10441 / D) (Chromatium vinosum).